The chain runs to 342 residues: Nicotinate-nucleotide--dimethylbenzimidazole phosphoribosyltransferase (342 aa).

E311 (proton acceptor) is an active-site residue.

The protein belongs to the CobT family.

It catalyses the reaction 5,6-dimethylbenzimidazole + nicotinate beta-D-ribonucleotide = alpha-ribazole 5'-phosphate + nicotinate + H(+). The protein operates within nucleoside biosynthesis; alpha-ribazole biosynthesis; alpha-ribazole from 5,6-dimethylbenzimidazole: step 1/2. Functionally, catalyzes the synthesis of alpha-ribazole-5'-phosphate from nicotinate mononucleotide (NAMN) and 5,6-dimethylbenzimidazole (DMB). In Shewanella loihica (strain ATCC BAA-1088 / PV-4), this protein is Nicotinate-nucleotide--dimethylbenzimidazole phosphoribosyltransferase.